Here is a 304-residue protein sequence, read N- to C-terminus: Hairy/enhancer-of-split related with YRPW motif protein 1 (304 aa).

Residues 1 to 52 form a disordered region; the sequence is MKRAHPEYSSSESELDETIEVEKESADENGNLSSALGSMSPTTSSQILARKR. A compositionally biased stretch (polar residues) spans 28-47; that stretch reads ENGNLSSALGSMSPTTSSQI. The tract at residues 48–117 is transcriptional repression and interaction with NCOR1 and SIN3A; it reads LARKRRRGII…GGKGYFDAHA (70 aa). A bHLH domain is found at 49-104; sequence ARKRRRGIIEKRRRDRINNSLSELRRLVPSAFEKQGSAKLEKAEILQMTVDHLKML. The region spanning 122–158 is the Orange domain; the sequence is YRSLGFRECLAEVARYLSIIEGLDASDPLRVRLVSHL. The segment covering 197-211 has biased composition (polar residues); the sequence is SQSTHGNTGTSASPT. The disordered stretch occupies residues 197–234; the sequence is SQSTHGNTGTSASPTESHHQGRLATAHPEASALRAPPS. Residues 294-297 carry the YRPW motif motif; sequence YRPW.

The protein belongs to the HEY family. As to quaternary structure, self-associates. Interacts with HES1 and HEYL. Interacts with HDAC1, NCOR1 and SIN3A. Interacts with GATA4 and GATA6. Interacts with CCDC89/BOIP.

The protein resides in the nucleus. Functionally, transcriptional repressor which binds preferentially to the canonical E box sequence 5'-CACGTG-3'. Downstream effector of Notch signaling required for cardiovascular development. Specifically required for the Notch-induced endocardial epithelial to mesenchymal transition, which is itself criticial for cardiac valve and septum development. May be required in conjunction with HEY2 to specify arterial cell fate or identity. Promotes maintenance of neuronal precursor cells and glial versus neuronal fate specification. Represses transcription by the cardiac transcriptional activators GATA4 and GATA6 and by the neuronal bHLH factors ASCL1/MASH1 and NEUROD4/MATH3. This is Hairy/enhancer-of-split related with YRPW motif protein 1 (HEY1) from Bos taurus (Bovine).